We begin with the raw amino-acid sequence, 354 residues long: DNA polymerase IV 2 (354 aa).

A UmuC domain is found at Ile-4–Gly-184. Residues Asp-8 and Asp-102 each contribute to the Mg(2+) site. Glu-103 is an active-site residue.

It belongs to the DNA polymerase type-Y family. In terms of assembly, monomer. It depends on Mg(2+) as a cofactor.

The protein localises to the cytoplasm. It carries out the reaction DNA(n) + a 2'-deoxyribonucleoside 5'-triphosphate = DNA(n+1) + diphosphate. In terms of biological role, poorly processive, error-prone DNA polymerase involved in untargeted mutagenesis. Copies undamaged DNA at stalled replication forks, which arise in vivo from mismatched or misaligned primer ends. These misaligned primers can be extended by PolIV. Exhibits no 3'-5' exonuclease (proofreading) activity. May be involved in translesional synthesis, in conjunction with the beta clamp from PolIII. This is DNA polymerase IV 2 (dinB2) from Rhizobium meliloti (strain 1021) (Ensifer meliloti).